Reading from the N-terminus, the 301-residue chain is tRNA dimethylallyltransferase (301 aa).

An ATP-binding site is contributed by 9–16 (GPTASGKS). Residue 11-16 (TASGKS) participates in substrate binding. The interaction with substrate tRNA stretch occupies residues 34–37 (DSMQ).

This sequence belongs to the IPP transferase family. In terms of assembly, monomer. Mg(2+) serves as cofactor.

It catalyses the reaction adenosine(37) in tRNA + dimethylallyl diphosphate = N(6)-dimethylallyladenosine(37) in tRNA + diphosphate. In terms of biological role, catalyzes the transfer of a dimethylallyl group onto the adenine at position 37 in tRNAs that read codons beginning with uridine, leading to the formation of N6-(dimethylallyl)adenosine (i(6)A). This Corynebacterium glutamicum (strain ATCC 13032 / DSM 20300 / JCM 1318 / BCRC 11384 / CCUG 27702 / LMG 3730 / NBRC 12168 / NCIMB 10025 / NRRL B-2784 / 534) protein is tRNA dimethylallyltransferase.